Consider the following 306-residue polypeptide: D-alanine--D-alanine ligase (306 aa).

Active-site residues include Glu-18 and Ser-150. The ATP-grasp domain occupies 104 to 303 (KMLWKAFGLP…FEQLVVKILE (200 aa)). 134–189 (VAKLGLPLMVKPSLEGSSVGLTKVKAVEELKSAVEYALKFDNTILIEEWLAGDELT) is an ATP binding site. Positions 257, 270, and 272 each coordinate Mg(2+). Residue Ser-281 is part of the active site.

Belongs to the D-alanine--D-alanine ligase family. Mg(2+) is required as a cofactor. The cofactor is Mn(2+).

The protein resides in the cytoplasm. It carries out the reaction 2 D-alanine + ATP = D-alanyl-D-alanine + ADP + phosphate + H(+). It participates in cell wall biogenesis; peptidoglycan biosynthesis. In terms of biological role, cell wall formation. This chain is D-alanine--D-alanine ligase, found in Haemophilus influenzae (strain ATCC 51907 / DSM 11121 / KW20 / Rd).